Here is a 263-residue protein sequence, read N- to C-terminus: Chymotrypsinogen B (263 aa).

Positions 1–18 (MAFLWLVSCFALVGATFG) are cleaved as a signal peptide. 5 cysteine pairs are disulfide-bonded: cysteine 19–cysteine 140, cysteine 60–cysteine 76, cysteine 154–cysteine 219, cysteine 186–cysteine 200, and cysteine 209–cysteine 238. A Peptidase S1 domain is found at 34–261 (IVNGEDAIPG…LMPWVQQILE (228 aa)). Histidine 75 (charge relay system) is an active-site residue. Serine 93 is subject to Phosphoserine. Aspartate 120 (charge relay system) is an active-site residue. Serine 213 acts as the Charge relay system in catalysis.

The protein belongs to the peptidase S1 family.

Its subcellular location is the secreted. It is found in the extracellular space. It catalyses the reaction Preferential cleavage: Tyr-|-Xaa, Trp-|-Xaa, Phe-|-Xaa, Leu-|-Xaa.. The protein is Chymotrypsinogen B (Ctrb1) of Rattus norvegicus (Rat).